A 1318-amino-acid chain; its full sequence is MVMQERNSNEDNKVNHGIDNIYVLELDLDGSVLFASTNFSQITGISSLELTGKPAALLSSDQEIFNAAIEQLLDDDSHSVKIHTVISKLPSLEENVFVQDEEMELQSKSVELDCVGVLIRDPLTSRPSHTLWVLQPLKPTRITRQEIGQQLTETLGFGAQLLAQHLEKLQTVPSTDSLPPFETVLCRVCDHEIQNWYFEHHTELCLLIHHAEARAQEANDLLNEQRNALQSLLDSLDDQIEPDVSYLGVPLAAVLPSSITSSAKSNSRSSLSQKIRNYISNMLFDAISYTDSCLAIHLPFIPESTTREDNQPFSEIRLLSPASEVFNAKTLSWCLPHIDDPGLQLMFENTDALVKKKLDAINRLSNIIYYSERVRCEIEDQVQTIIEQSIQVDGYDEPLSTTTPTLIEPIQETLMTQSPIIECEPFNTVKPSVSPEEVHDISQFNHRNDPPITAASVDSSNSFSVHRSSTNHSSTNSGSPNLSRRNNLAIPIASRRKSVSAVNTLYGVGSSYTSESFPFSKLTVPVERNSFRETESPKPFLSRQIGISTLSSNISSGKGTPSIQDYEIIKPISKGTFGTVYLSRKNTTGEIYAIKVLRKVDMISKNQVANVKAERAVLMAQEESAFVAKLYYAFQSRDYLYLVMEFMNGGDCASLLKSLYTIPESWAKIYIAEVALGLEHLHRLGIIHRDIKPDNILMSITGHLKLADFGLSQLGLTTRQLRLQKGKNNILSPPSFQSPTALGDPGDNIASSPLILPTSVSAFSYDEKSQKQKTELATFTTYKEDDTTTTTRTSIDSISSKYLESPVDSQKVNRTPNLQSVPFFRQPDAPKRFVGTPDYLAPETLRGSTQDDMVDWWALGCVLFEFLFGYPPFHAETPEKVFENILANNIAWPDLEMYPCSEEALDLINGFLQPNPERRLGFSDINEIKEHPFFNGINWDDIFSHEAPFIPAPETPLDTAYFDSRGAGAAESNMSSSVNSGEEVSKDNNVSQERGSQFLRSSHGRSRERSTSARRSRRFSEANSEFDEFGPFSYKNLSVLERANRNAIEKIRSEIAGKLHISPPDPHIGYTPGSDMPSAKLYDQQLTLSPSLMTNQGSNFSSTDSTPRKSINSSDVESRSKTDGPKSMHDLIKQLHMRKHSSHTNQSTGSSESDDLFNLDLPISNLETSYPFKIEEGQASPLSSPLSKTPPFFSSSVPLKALICVSKLNLFSELIKLLKSYKFQVSIVTDEDKMLRTLMADEKFSIIFLQLDLTRVSGVSILKIVRSSNCANRNTPAIALTPTRIDINAAIPRMFDGRLYLPINAFLLRGYIARLCNK.

Residues 431–485 form a disordered region; it reads PSVSPEEVHDISQFNHRNDPPITAASVDSSNSFSVHRSSTNHSSTNSGSPNLSRR. Low complexity predominate over residues 462–479; that stretch reads SFSVHRSSTNHSSTNSGS. The 369-residue stretch at 566-934 folds into the Protein kinase domain; that stretch reads YEIIKPISKG…INEIKEHPFF (369 aa). ATP-binding positions include 572 to 580 and K595; that span reads ISKGTFGTV. The Proton acceptor role is filled by D690. Residues 935–1044 form the AGC-kinase C-terminal domain; sequence NGINWDDIFS…KNLSVLERAN (110 aa). 3 disordered regions span residues 968 to 1022, 1058 to 1078, and 1091 to 1127; these read GAAE…FSEA, KLHI…DMPS, and SLMT…GPKS. Residues 972 to 1000 are compositionally biased toward polar residues; sequence SNMSSSVNSGEEVSKDNNVSQERGSQFLR. Residues 1091–1115 show a composition bias toward polar residues; the sequence is SLMTNQGSNFSSTDSTPRKSINSSD. The segment covering 1116–1127 has biased composition (basic and acidic residues); it reads VESRSKTDGPKS. In terms of domain architecture, Response regulatory spans 1200-1316; the sequence is KALICVSKLN…LLRGYIARLC (117 aa).

Belongs to the protein kinase superfamily. Ser/Thr protein kinase family.

The protein resides in the cytoplasm. The enzyme catalyses L-seryl-[protein] + ATP = O-phospho-L-seryl-[protein] + ADP + H(+). It catalyses the reaction L-threonyl-[protein] + ATP = O-phospho-L-threonyl-[protein] + ADP + H(+). This Schizosaccharomyces pombe (strain 972 / ATCC 24843) (Fission yeast) protein is Serine/threonine-protein kinase ppk18 (ppk18).